A 72-amino-acid chain; its full sequence is Translation initiation factor IF-1 (72 aa).

The 72-residue stretch at 1 to 72 (MAKEETIQMQ…SRARITFRAK (72 aa)) folds into the S1-like domain.

The protein belongs to the IF-1 family. As to quaternary structure, component of the 30S ribosomal translation pre-initiation complex which assembles on the 30S ribosome in the order IF-2 and IF-3, IF-1 and N-formylmethionyl-tRNA(fMet); mRNA recruitment can occur at any time during PIC assembly.

Its subcellular location is the cytoplasm. One of the essential components for the initiation of protein synthesis. Stabilizes the binding of IF-2 and IF-3 on the 30S subunit to which N-formylmethionyl-tRNA(fMet) subsequently binds. Helps modulate mRNA selection, yielding the 30S pre-initiation complex (PIC). Upon addition of the 50S ribosomal subunit IF-1, IF-2 and IF-3 are released leaving the mature 70S translation initiation complex. This is Translation initiation factor IF-1 from Nitrosospira multiformis (strain ATCC 25196 / NCIMB 11849 / C 71).